A 328-amino-acid polypeptide reads, in one-letter code: Tetraacyldisaccharide 4'-kinase (328 aa).

55 to 62 (TAGGNGKT) lines the ATP pocket.

The protein belongs to the LpxK family.

It catalyses the reaction a lipid A disaccharide + ATP = a lipid IVA + ADP + H(+). It functions in the pathway glycolipid biosynthesis; lipid IV(A) biosynthesis; lipid IV(A) from (3R)-3-hydroxytetradecanoyl-[acyl-carrier-protein] and UDP-N-acetyl-alpha-D-glucosamine: step 6/6. Functionally, transfers the gamma-phosphate of ATP to the 4'-position of a tetraacyldisaccharide 1-phosphate intermediate (termed DS-1-P) to form tetraacyldisaccharide 1,4'-bis-phosphate (lipid IVA). The chain is Tetraacyldisaccharide 4'-kinase from Escherichia coli O157:H7.